The following is a 631-amino-acid chain: Phosphomethylpyrimidine synthase (631 aa).

Residues asparagine 239, methionine 268, tyrosine 297, histidine 333, 353–355, 394–397, and glutamate 433 each bind substrate; these read SRG and DGLR. Histidine 437 contacts Zn(2+). Tyrosine 460 is a substrate binding site. A Zn(2+)-binding site is contributed by histidine 501. Residues cysteine 581, cysteine 584, and cysteine 589 each coordinate [4Fe-4S] cluster.

It belongs to the ThiC family. Homodimer. [4Fe-4S] cluster serves as cofactor.

It carries out the reaction 5-amino-1-(5-phospho-beta-D-ribosyl)imidazole + S-adenosyl-L-methionine = 4-amino-2-methyl-5-(phosphooxymethyl)pyrimidine + CO + 5'-deoxyadenosine + formate + L-methionine + 3 H(+). It participates in cofactor biosynthesis; thiamine diphosphate biosynthesis. In terms of biological role, catalyzes the synthesis of the hydroxymethylpyrimidine phosphate (HMP-P) moiety of thiamine from aminoimidazole ribotide (AIR) in a radical S-adenosyl-L-methionine (SAM)-dependent reaction. This chain is Phosphomethylpyrimidine synthase, found in Salmonella arizonae (strain ATCC BAA-731 / CDC346-86 / RSK2980).